The following is an 82-amino-acid chain: RNA-binding protein GWCH70_0105 (82 aa).

Belongs to the eukaryotic ribosomal protein eL8 family.

The chain is RNA-binding protein GWCH70_0105 from Geobacillus sp. (strain WCH70).